Here is a 373-residue protein sequence, read N- to C-terminus: tRNA-specific 2-thiouridylase MnmA (373 aa).

ATP contacts are provided by residues G12–S19 and M38. The interaction with target base in tRNA stretch occupies residues N98–D100. The active-site Nucleophile is the C103. A disulfide bond links C103 and C200. Position 127 (G127) interacts with ATP. An interaction with tRNA region spans residues K150–Q152. The Cysteine persulfide intermediate role is filled by C200. The interval R312–Y313 is interaction with tRNA.

This sequence belongs to the MnmA/TRMU family.

Its subcellular location is the cytoplasm. The enzyme catalyses S-sulfanyl-L-cysteinyl-[protein] + uridine(34) in tRNA + AH2 + ATP = 2-thiouridine(34) in tRNA + L-cysteinyl-[protein] + A + AMP + diphosphate + H(+). Catalyzes the 2-thiolation of uridine at the wobble position (U34) of tRNA, leading to the formation of s(2)U34. The polypeptide is tRNA-specific 2-thiouridylase MnmA (Streptococcus sanguinis (strain SK36)).